The sequence spans 399 residues: Acetate kinase (399 aa).

Asn-7 is a binding site for Mg(2+). An ATP-binding site is contributed by Lys-14. Arg-89 provides a ligand contact to substrate. Asp-146 serves as the catalytic Proton donor/acceptor. ATP-binding positions include 206–210 (HLGNG), 280–282 (DMR), and 328–332 (GIGEN). Residue Glu-382 participates in Mg(2+) binding.

The protein belongs to the acetokinase family. As to quaternary structure, homodimer. Mg(2+) is required as a cofactor. Mn(2+) serves as cofactor.

The protein resides in the cytoplasm. The enzyme catalyses acetate + ATP = acetyl phosphate + ADP. It functions in the pathway metabolic intermediate biosynthesis; acetyl-CoA biosynthesis; acetyl-CoA from acetate: step 1/2. In terms of biological role, catalyzes the formation of acetyl phosphate from acetate and ATP. Can also catalyze the reverse reaction. The chain is Acetate kinase from Campylobacter fetus subsp. fetus (strain 82-40).